Reading from the N-terminus, the 572-residue chain is Proline--tRNA ligase (572 aa).

Belongs to the class-II aminoacyl-tRNA synthetase family. ProS type 1 subfamily. As to quaternary structure, homodimer.

It localises to the cytoplasm. The enzyme catalyses tRNA(Pro) + L-proline + ATP = L-prolyl-tRNA(Pro) + AMP + diphosphate. Functionally, catalyzes the attachment of proline to tRNA(Pro) in a two-step reaction: proline is first activated by ATP to form Pro-AMP and then transferred to the acceptor end of tRNA(Pro). As ProRS can inadvertently accommodate and process non-cognate amino acids such as alanine and cysteine, to avoid such errors it has two additional distinct editing activities against alanine. One activity is designated as 'pretransfer' editing and involves the tRNA(Pro)-independent hydrolysis of activated Ala-AMP. The other activity is designated 'posttransfer' editing and involves deacylation of mischarged Ala-tRNA(Pro). The misacylated Cys-tRNA(Pro) is not edited by ProRS. In Escherichia coli O17:K52:H18 (strain UMN026 / ExPEC), this protein is Proline--tRNA ligase.